The primary structure comprises 518 residues: Xylose import ATP-binding protein XylG (518 aa).

ABC transporter domains follow at residues 6–245 and 262–507; these read LQMN…VGRE and FEAR…LSQP. 38-45 contributes to the ATP binding site; it reads GENGAGKS.

This sequence belongs to the ABC transporter superfamily. Xylose importer (TC 3.A.1.2.4) family. In terms of assembly, the complex is composed of two ATP-binding proteins (XylG), two transmembrane proteins (XylH) and a solute-binding protein (XylF).

The protein localises to the cell inner membrane. The enzyme catalyses D-xylose(out) + ATP + H2O = D-xylose(in) + ADP + phosphate + H(+). Part of the ABC transporter complex XylFGH involved in xylose import. Responsible for energy coupling to the transport system. In Pseudomonas fluorescens (strain Pf0-1), this protein is Xylose import ATP-binding protein XylG.